The primary structure comprises 267 residues: Large ribosomal subunit protein uL3 (267 aa).

A disordered region spans residues N124–L147.

Belongs to the universal ribosomal protein uL3 family. As to quaternary structure, part of the 50S ribosomal subunit. Forms a cluster with proteins L14 and L19.

One of the primary rRNA binding proteins, it binds directly near the 3'-end of the 23S rRNA, where it nucleates assembly of the 50S subunit. The chain is Large ribosomal subunit protein uL3 from Mycoplasmopsis agalactiae (strain NCTC 10123 / CIP 59.7 / PG2) (Mycoplasma agalactiae).